Reading from the N-terminus, the 299-residue chain is Urease accessory protein UreD (299 aa).

It belongs to the UreD family. UreD, UreF and UreG form a complex that acts as a GTP-hydrolysis-dependent molecular chaperone, activating the urease apoprotein by helping to assemble the nickel containing metallocenter of UreC. The UreE protein probably delivers the nickel.

The protein localises to the cytoplasm. Required for maturation of urease via the functional incorporation of the urease nickel metallocenter. This Natronomonas pharaonis (strain ATCC 35678 / DSM 2160 / CIP 103997 / JCM 8858 / NBRC 14720 / NCIMB 2260 / Gabara) (Halobacterium pharaonis) protein is Urease accessory protein UreD.